Reading from the N-terminus, the 501-residue chain is uncharacterized protein (501 aa).

Disordered stretches follow at residues 179–404 and 480–501; these read EKTS…DETA and SDDTDDTDDTNNSCSSEVDDSD. Residues 191 to 200 show a composition bias toward basic and acidic residues; sequence SRNESQDKSR. A compositionally biased stretch (basic residues) spans 201–214; sequence DKSRKKVCNTHKNK. The span at 215 to 226 shows a compositional bias: basic and acidic residues; the sequence is KTLDNVKPDKNI. Residues 231-274 are compositionally biased toward low complexity; that stretch reads SSNKFTTNKPKSNKNSSDSDGSTKTTKSTRSTKSTKSSKSQKST. Basic and acidic residues predominate over residues 304-316; sequence NPKESINHKKNDS. A compositionally biased stretch (polar residues) spans 333–352; the sequence is DSTNCRKSNRTTTRDVTNSD. The segment covering 379–403 has biased composition (acidic residues); sequence EQSDLTEDETEENVSEEDETEEDET.

This is an uncharacterized protein from Acanthamoeba polyphaga mimivirus (APMV).